Consider the following 192-residue polypeptide: MGNSRSSALSREVLQELRASTRYTEEELSRWYEGFQRQCPDGRIRCDEFERIYGNFFPNSEPQGYARHVFRSFDTNDDGTLDFREYIIALHLTSSGKTHLKLEWAFSLFDVDRNGEVSKSEVLEIITAIFKMIPEEERLQLPEDENSPQKRADKLWAYFNKGENDKIAEGEFIDGVMKNDAIMRLIQYEPKK.

A lipid anchor (N-myristoyl glycine) is attached at G2. 4 consecutive EF-hand domains span residues 24-59 (TEEE…FFPN), 61-96 (EPQG…TSSG), 97-132 (KTHL…IFKM), and 146-181 (NSPQ…KNDA). Ca(2+) is bound by residues D74, N76, D78, T80, E85, D110, D112, N114, E116, E121, N164, K166, and E171.

It belongs to the recoverin family. In terms of tissue distribution, retinal cell specific protein.

Its function is as follows. Seems to be implicated in the pathway from retinal rod guanylate cyclase to rhodopsin. May be involved in the blocking of the phosphorylation of rhodopsin. This chain is Visinin, found in Gallus gallus (Chicken).